The sequence spans 167 residues: uncharacterized protein (167 aa).

Basic residues predominate over residues 1-10 (MPLRRCRAWR). Positions 1–23 (MPLRRCRAWRGHSQPGTGSRSNE) are disordered.

This is an uncharacterized protein from Sinorhizobium fredii (strain NBRC 101917 / NGR234).